A 795-amino-acid polypeptide reads, in one-letter code: Phenylalanine--tRNA ligase beta subunit (795 aa).

The tRNA-binding domain occupies 39–148 (AGTFNGVVVG…LDAPIGTDLR (110 aa)). The 76-residue stretch at 401–476 (PKVNTVQLRR…RIYGYNSIPN (76 aa)) folds into the B5 domain. Asp-454, Asp-460, Glu-463, and Glu-464 together coordinate Mg(2+). An FDX-ACB domain is found at 701 to 794 (SKFPANRRDL…VKQRFNAELR (94 aa)).

It belongs to the phenylalanyl-tRNA synthetase beta subunit family. Type 1 subfamily. In terms of assembly, tetramer of two alpha and two beta subunits. It depends on Mg(2+) as a cofactor.

The protein localises to the cytoplasm. It catalyses the reaction tRNA(Phe) + L-phenylalanine + ATP = L-phenylalanyl-tRNA(Phe) + AMP + diphosphate + H(+). The polypeptide is Phenylalanine--tRNA ligase beta subunit (Haemophilus influenzae (strain 86-028NP)).